The chain runs to 620 residues: Probable potassium transport system protein Kup 2 (620 aa).

12 helical membrane-spanning segments follow: residues 10-30, 50-70, 102-122, 136-156, 168-188, 211-231, 246-266, 284-304, 336-356, 368-388, 393-413, and 415-435; these read LLVS…LYAL, VLSL…VIVI, MMLG…TPAI, PDLR…LFAI, FGPV…VNVI, LMSF…EALY, WFCL…ALLI, MVVP…QAVI, IYVP…VVGF, IAVT…MALL, MALV…FFSA, and IIKV…SFTV.

Belongs to the HAK/KUP transporter (TC 2.A.72) family.

The protein localises to the cell inner membrane. It catalyses the reaction K(+)(in) + H(+)(in) = K(+)(out) + H(+)(out). Transport of potassium into the cell. Likely operates as a K(+):H(+) symporter. This Rhodopseudomonas palustris (strain BisB5) protein is Probable potassium transport system protein Kup 2.